Consider the following 937-residue polypeptide: Isoleucine--tRNA ligase (937 aa).

The 'HIGH' region signature appears at 58-68 (PYANGHIHLGT). Glu-566 serves as a coordination point for L-isoleucyl-5'-AMP. A 'KMSKS' region motif is present at residues 607-611 (KMSKS). Lys-610 is a binding site for ATP. Residues Cys-906, Cys-909, Cys-925, and Cys-928 each coordinate Zn(2+).

The protein belongs to the class-I aminoacyl-tRNA synthetase family. IleS type 1 subfamily. In terms of assembly, monomer. Zn(2+) is required as a cofactor.

It localises to the cytoplasm. It catalyses the reaction tRNA(Ile) + L-isoleucine + ATP = L-isoleucyl-tRNA(Ile) + AMP + diphosphate. Its function is as follows. Catalyzes the attachment of isoleucine to tRNA(Ile). As IleRS can inadvertently accommodate and process structurally similar amino acids such as valine, to avoid such errors it has two additional distinct tRNA(Ile)-dependent editing activities. One activity is designated as 'pretransfer' editing and involves the hydrolysis of activated Val-AMP. The other activity is designated 'posttransfer' editing and involves deacylation of mischarged Val-tRNA(Ile). This is Isoleucine--tRNA ligase from Lawsonia intracellularis (strain PHE/MN1-00).